Here is a 463-residue protein sequence, read N- to C-terminus: Glucagon-like peptide 1 receptor (463 aa).

Residues 1–21 (MAVTPSLLRLALLLLGAVGRA) form the signal peptide. Over 22–139 (GPRPQGATVS…KQGERNSPEE (118 aa)) the chain is Extracellular. Disulfide bonds link Cys46-Cys71, Cys62-Cys104, and Cys85-Cys126. Residues Asn63, Asn82, and Asn115 are each glycosylated (N-linked (GlcNAc...) asparagine). Residues 140–164 (QLLSLYIIYTVGYALSFSALVIASA) form a helical membrane-spanning segment. Over 165–175 (ILVSFRHLHCT) the chain is Cytoplasmic. Residues 176 to 201 (RNYIHLNLFASFILRALSVFIKDAAL) form a helical membrane-spanning segment. The Extracellular portion of the chain corresponds to 202–227 (KWMYSTAAQQHQWDGLLSYQDSLGCR). An intrachain disulfide couples Cys226 to Cys296. Residues 228–251 (LVFLLMQYCVAANYYWLLVEGVYL) traverse the membrane as a helical segment. The Cytoplasmic segment spans residues 252-265 (YTLLAFSVFSEQRI). A helical membrane pass occupies residues 266–290 (FKLYLSIGWGVPLLFVIPWGIVKYL). Residues 291–305 (YEDEGCWTRNSNMNY) lie on the Extracellular side of the membrane. Residues 306–328 (WLIIRLPILFAIGVNFLVFIRVI) form a helical membrane-spanning segment. Topologically, residues 329-348 (CIVIAKLKANLMCKTDIKCR) are cytoplasmic. Cys341 bears the ADP-ribosylcysteine mark. The residue at position 348 (Arg348) is an ADP-ribosylarginine. Residues 349-370 (LAKSTLTLIPLLGTHEVIFAFV) traverse the membrane as a helical segment. Residues 352-355 (STLT) are important for allosteric inhibitor binding. At 371–383 (MDEHARGTLRFVK) the chain is on the extracellular side. A helical transmembrane segment spans residues 384 to 404 (LFTELSFTSFQGFMVAVLYCF). The Cytoplasmic segment spans residues 405–463 (VNNEVQMEFRKSWERWRLERLNIQRDSSMKPLKCPTSSVSSGATVGSSVYAATCQNSCS).

It belongs to the G-protein coupled receptor 2 family. May form homodimers and heterodimers with GIPR. In terms of processing, N-glycosylation enhances cell surface expression and lengthens receptor half-life by preventing degradation in the ER. In terms of tissue distribution, pancreatic islets, stomach, lung, rat insulinoma cell line.

It localises to the cell membrane. In terms of biological role, G-protein coupled receptor for glucagon-like peptide 1 (GLP-1). Ligand binding triggers activation of a signaling cascade that leads to the activation of adenylyl cyclase and increased intracellular cAMP levels. Plays a role in regulating insulin secretion in response to GLP-1. The polypeptide is Glucagon-like peptide 1 receptor (Glp1r) (Rattus norvegicus (Rat)).